A 1037-amino-acid polypeptide reads, in one-letter code: uncharacterized protein (1037 aa).

This is an uncharacterized protein from Saccharomyces cerevisiae (strain ATCC 204508 / S288c) (Baker's yeast).